A 90-amino-acid polypeptide reads, in one-letter code: Small ribosomal subunit protein bS18 (90 aa).

Residues 1-24 (MKPMRQKPGRGQGNKSISNALASK) form a disordered region.

The protein belongs to the bacterial ribosomal protein bS18 family. Part of the 30S ribosomal subunit. Forms a tight heterodimer with protein bS6.

Functionally, binds as a heterodimer with protein bS6 to the central domain of the 16S rRNA, where it helps stabilize the platform of the 30S subunit. The chain is Small ribosomal subunit protein bS18 from Chlorobium phaeovibrioides (strain DSM 265 / 1930) (Prosthecochloris vibrioformis (strain DSM 265)).